Reading from the N-terminus, the 430-residue chain is Shufflon protein A' (430 aa).

Residues 1 to 361 (MKKYDRGWAS…TGAILSCQSG (361 aa)) form a constant region region. A variable region region spans residues 362-430 (TWGTIGGKLK…GCIASCVTLN (69 aa)).

The protein is Shufflon protein A' of Escherichia coli.